The chain runs to 237 residues: MPVKKKRKSPGVAAAVAEDGGLKKCKISSYCRSQPPARLISGEEHFSSKKCLAWFYEYAGPDEVVGPEGMEKFCEDIGVEPENIIMLVLAWKLEAESMGFFTKEEWLKGMTSLQCDCTEKLQNKFDFLRSQLNDISSFKNIYRYAFDFARDKDQRSLDIDTAKSMLALLLGRTWPLFSVFYQYPEQSKYRVMNKDQWYNVLEFSRAVHADLSNYDEDGAWPVLLDEFVEWQKVRQTS.

Phosphoserine is present on residues Ser9, Ser41, and Ser48. The DCUN1 domain occupies 46-232 (FSSKKCLAWF…LLDEFVEWQK (187 aa)).

As to quaternary structure, part of a complex that contains DCUN1D5, CUL1 and RBX1; this interaction is bridged by CUL1. Interacts (via the DCUN1 domain) with the unneddylated cullins: interacts with CUL1, CUL2, CUL3, CUL4A, CUL4B and CUL5; these interactions promote the cullin neddylation and the identity of the cullin dictates the affinity of the interaction. Interacts (via DCUN1 domain) with UBE2M (N-terminally acetylated form) and probably with UBE2F (N-terminally acetylated form). May also interact with regulators or subunits of cullin-RING ligases such as RBX1, RNF7, ELOB and DDB1; these interactions are bridged by cullins. Interacts with CAND1; this interaction is bridged by cullins and strongly inhibits the neddylation of cullins. These CAND-cullin-DCNL complexes can only be neddylated in the presence of a substrate adapter. Phosphorylation at Ser-41 is independent of cullin's interaction. Phosphorylated in response to both TICAM1 and MYD88 dependent Toll-like receptor (TLR) pathway activation. Phosphorylated in response to IL1B stimulation.

It localises to the nucleus. The protein localises to the cytoplasm. Its subcellular location is the cytoskeleton. It is found in the spindle. Contributes to the neddylation of all cullins by transferring NEDD8 from N-terminally acetylated NEDD8-conjugating E2s enzyme to different cullin C-terminal domain-RBX complexes which is necessary for the activation of cullin-RING E3 ubiquitin ligases (CRLs). May play a role in DNA damage response and may participate in cell proliferation and anchorage-independent cell growth. The polypeptide is DCN1-like protein 5 (Pongo abelii (Sumatran orangutan)).